We begin with the raw amino-acid sequence, 483 residues long: Aspartyl/glutamyl-tRNA(Asn/Gln) amidotransferase subunit B (483 aa).

It belongs to the GatB/GatE family. GatB subfamily. In terms of assembly, heterotrimer of A, B and C subunits.

The enzyme catalyses L-glutamyl-tRNA(Gln) + L-glutamine + ATP + H2O = L-glutaminyl-tRNA(Gln) + L-glutamate + ADP + phosphate + H(+). It catalyses the reaction L-aspartyl-tRNA(Asn) + L-glutamine + ATP + H2O = L-asparaginyl-tRNA(Asn) + L-glutamate + ADP + phosphate + 2 H(+). Functionally, allows the formation of correctly charged Asn-tRNA(Asn) or Gln-tRNA(Gln) through the transamidation of misacylated Asp-tRNA(Asn) or Glu-tRNA(Gln) in organisms which lack either or both of asparaginyl-tRNA or glutaminyl-tRNA synthetases. The reaction takes place in the presence of glutamine and ATP through an activated phospho-Asp-tRNA(Asn) or phospho-Glu-tRNA(Gln). The chain is Aspartyl/glutamyl-tRNA(Asn/Gln) amidotransferase subunit B from Rickettsia africae (strain ESF-5).